We begin with the raw amino-acid sequence, 186 residues long: Ribosome-recycling factor (186 aa).

It belongs to the RRF family.

It is found in the cytoplasm. In terms of biological role, responsible for the release of ribosomes from messenger RNA at the termination of protein biosynthesis. May increase the efficiency of translation by recycling ribosomes from one round of translation to another. This chain is Ribosome-recycling factor, found in Ralstonia pickettii (strain 12J).